The following is a 924-amino-acid chain: LPS-assembly protein LptD (924 aa).

The first 33 residues, 1 to 33 (MAVKSLVFRRKFPLLVTGSLLALQPVAALTVQA), serve as a signal peptide directing secretion. The interval 58-102 (NLPPRPAHTATSVSTAAAGSSVSGSGGETVEAEPTQRLVTESGGR) is disordered. Residues 66–90 (TATSVSTAAAGSSVSGSGGETVEAE) are compositionally biased toward low complexity.

The protein belongs to the LptD family. In terms of assembly, component of the lipopolysaccharide transport and assembly complex. Interacts with LptE and LptA.

Its subcellular location is the cell outer membrane. Functionally, together with LptE, is involved in the assembly of lipopolysaccharide (LPS) at the surface of the outer membrane. The chain is LPS-assembly protein LptD from Pseudomonas aeruginosa (strain UCBPP-PA14).